The chain runs to 430 residues: MTLNNDLPLNNIGFTGSGLNDGTEGLDDLFSSSIVDNEPLEALVETPTFASPSPNLKRDQIVPSNIAKIKVIGVGGGGCNAVNRMIASGVTGIDFWAINTDSQALTNTNAPDCIQIGQKLTRGLGAGGNPAIGQKAAEESRDEIARSLEGTDLVFITAGMGGGTGTGAAPIVAEVAKEMGCLTVGIVTRPFTFEGRRRAKQAEEGINALQSRVDTLIVIPNNQLLSVIPAETPLQEAFRVADDILRQGVQGISDIIIIPGLVNVDFADVRAVMADAGSALMGIGVGSGKSRAKEAATAAISSPLLESSIQGAKGVVFNVTGGTDLTLHEVNVAAEIIYEVVDADANIIFGAVIDDRLQGEMRITVIATGFNGEKEKPQAKTSSKPVLSGPPAGVETVPSTTTPEDPLGEIPMAPELDIPDFLQKRRFPRR.

GTP contacts are provided by residues 76 to 80 (GGGCN), 163 to 165 (GTG), glutamate 194, arginine 198, and aspartate 242. Positions 374–418 (KEKPQAKTSSKPVLSGPPAGVETVPSTTTPEDPLGEIPMAPELDI) are disordered.

The protein belongs to the FtsZ family. Homodimer. Polymerizes to form a dynamic ring structure in a strictly GTP-dependent manner. Interacts directly with several other division proteins.

The protein localises to the cytoplasm. Functionally, essential cell division protein that forms a contractile ring structure (Z ring) at the future cell division site. The regulation of the ring assembly controls the timing and the location of cell division. One of the functions of the FtsZ ring is to recruit other cell division proteins to the septum to produce a new cell wall between the dividing cells. Binds GTP and shows GTPase activity. The chain is Cell division protein FtsZ from Synechocystis sp. (strain ATCC 27184 / PCC 6803 / Kazusa).